We begin with the raw amino-acid sequence, 668 residues long: uncharacterized protein (668 aa).

Helical transmembrane passes span 182–202 (FAFA…GILG), 208–228 (PYSY…IQFW), 286–306 (VPLF…AFIV), 321–341 (IVSL…TFIY), 379–399 (ALFL…PHYI), 430–450 (IYFL…VPQL), 499–519 (FVLM…APIF), 557–577 (LSLL…FYSS), and 587–607 (VIAA…RMFI).

It is found in the membrane. This is an uncharacterized protein from Schizosaccharomyces pombe (strain 972 / ATCC 24843) (Fission yeast).